Here is a 1882-residue protein sequence, read N- to C-terminus: uncharacterized protein (1882 aa).

A helical transmembrane segment spans residues 16–36; the sequence is FFLLFGIIFVLFSIIFLETSI. Disordered stretches follow at residues 103 to 129, 220 to 306, 492 to 513, and 658 to 698; these read DFGS…DVND, FPGD…ESET, VALA…VKDP, and QTDE…TKST. Residues 221 to 239 show a composition bias toward basic and acidic residues; it reads PGDKGKGEDKKTTKKKSEI. Over residues 240 to 249 the composition is skewed to polar residues; that stretch reads KQASSATTVL. Basic and acidic residues-rich tracts occupy residues 259–275, 284–294, and 500–511; these read TDAK…KDSN, NKDKVWFKSDE, and DKQESSADDGVK. A compositionally biased stretch (low complexity) spans 667–698; it reads AKTTQGTTDSLTQLADASSSSSSSSTGDTKST. Helical transmembrane passes span 987–1007, 1037–1057, 1080–1100, and 1154–1174; these read ASVV…ILLI, VFAG…AFLL, WISF…ISWI, and LFTY…AGTI. Disordered stretches follow at residues 1233 to 1253 and 1572 to 1598; these read DQIQ…EHPY and KDGQ…TSST. The span at 1234–1245 shows a compositional bias: low complexity; it reads QIQQQQQQQQQQ. The segment covering 1583–1594 has biased composition (gly residues); sequence TSSGGGSCGGGS. The next 4 membrane-spanning stretches (helical) occupy residues 1759-1779, 1807-1827, 1828-1848, and 1851-1871; these read FLLG…GISM, FFIP…AGLL, VGVQ…VFEF, and YMVG…YFWI.

It belongs to the ABC-4 integral membrane protein family.

The protein localises to the cell membrane. This is an uncharacterized protein from Mycoplasma pneumoniae (strain ATCC 29342 / M129 / Subtype 1) (Mycoplasmoides pneumoniae).